We begin with the raw amino-acid sequence, 91 residues long: Probable Fe(2+)-trafficking protein (91 aa).

Belongs to the Fe(2+)-trafficking protein family.

Could be a mediator in iron transactions between iron acquisition and iron-requiring processes, such as synthesis and/or repair of Fe-S clusters in biosynthetic enzymes. This chain is Probable Fe(2+)-trafficking protein, found in Burkholderia mallei (strain NCTC 10247).